A 453-amino-acid polypeptide reads, in one-letter code: Bifunctional protein GlmU (453 aa).

Positions 1–227 (MTQLSVVILA…LMEVEGANNR (227 aa)) are pyrophosphorylase. Residues 9–12 (LAAG), lysine 23, glutamine 74, 79–80 (GT), 101–103 (YGD), glycine 138, glutamate 152, asparagine 167, and asparagine 225 each bind UDP-N-acetyl-alpha-D-glucosamine. Residue aspartate 103 coordinates Mg(2+). Asparagine 225 lines the Mg(2+) pocket. A linker region spans residues 228–248 (LQLAALERYYQKIQAEKLLLA). Residues 249 to 453 (GVTIIDPARF…IQGWQRPTKK (205 aa)) are N-acetyltransferase. UDP-N-acetyl-alpha-D-glucosamine contacts are provided by arginine 331 and lysine 349. Histidine 361 acts as the Proton acceptor in catalysis. Residues tyrosine 364 and asparagine 375 each coordinate UDP-N-acetyl-alpha-D-glucosamine. Acetyl-CoA-binding positions include alanine 378, 384–385 (NY), serine 403, alanine 421, and arginine 438.

This sequence in the N-terminal section; belongs to the N-acetylglucosamine-1-phosphate uridyltransferase family. The protein in the C-terminal section; belongs to the transferase hexapeptide repeat family. In terms of assembly, homotrimer. Mg(2+) serves as cofactor.

It is found in the cytoplasm. It carries out the reaction alpha-D-glucosamine 1-phosphate + acetyl-CoA = N-acetyl-alpha-D-glucosamine 1-phosphate + CoA + H(+). The enzyme catalyses N-acetyl-alpha-D-glucosamine 1-phosphate + UTP + H(+) = UDP-N-acetyl-alpha-D-glucosamine + diphosphate. Its pathway is nucleotide-sugar biosynthesis; UDP-N-acetyl-alpha-D-glucosamine biosynthesis; N-acetyl-alpha-D-glucosamine 1-phosphate from alpha-D-glucosamine 6-phosphate (route II): step 2/2. It functions in the pathway nucleotide-sugar biosynthesis; UDP-N-acetyl-alpha-D-glucosamine biosynthesis; UDP-N-acetyl-alpha-D-glucosamine from N-acetyl-alpha-D-glucosamine 1-phosphate: step 1/1. It participates in bacterial outer membrane biogenesis; LPS lipid A biosynthesis. Its function is as follows. Catalyzes the last two sequential reactions in the de novo biosynthetic pathway for UDP-N-acetylglucosamine (UDP-GlcNAc). The C-terminal domain catalyzes the transfer of acetyl group from acetyl coenzyme A to glucosamine-1-phosphate (GlcN-1-P) to produce N-acetylglucosamine-1-phosphate (GlcNAc-1-P), which is converted into UDP-GlcNAc by the transfer of uridine 5-monophosphate (from uridine 5-triphosphate), a reaction catalyzed by the N-terminal domain. The chain is Bifunctional protein GlmU from Glaesserella parasuis serovar 5 (strain SH0165) (Haemophilus parasuis).